The chain runs to 155 residues: MKLQLVAVGTKMPDWVQTGFSEYLRRFPKDMPFELVEIPAGKRGKNADIKRILEKEGEMMLAAAGKNRIVTLDIPGKPWDTPQLARELERWKQDGRDVSLLVGGPEGLSPACKAAAEQSWSLSTLTLPHPLVRVLVAESLYRAWSITTNHPYHRE.

Residues Leu72, Gly103, and 122–127 each bind S-adenosyl-L-methionine; that span reads LSTLTL.

Belongs to the RNA methyltransferase RlmH family. As to quaternary structure, homodimer.

The protein resides in the cytoplasm. It catalyses the reaction pseudouridine(1915) in 23S rRNA + S-adenosyl-L-methionine = N(3)-methylpseudouridine(1915) in 23S rRNA + S-adenosyl-L-homocysteine + H(+). In terms of biological role, specifically methylates the pseudouridine at position 1915 (m3Psi1915) in 23S rRNA. The protein is Ribosomal RNA large subunit methyltransferase H of Klebsiella pneumoniae (strain 342).